We begin with the raw amino-acid sequence, 296 residues long: Haloalkane dehalogenase (296 aa).

The AB hydrolase-1 domain occupies 31-155; the sequence is PILFQHGNPT…QDRDLFQAFR (125 aa). Position 38 (asparagine 38) interacts with chloride. Aspartate 108 serves as the catalytic Nucleophile. Residue tryptophan 109 participates in chloride binding. The active-site Proton donor is glutamate 132. Residue histidine 272 is the Proton acceptor of the active site.

This sequence belongs to the haloalkane dehalogenase family. Type 2 subfamily. Monomer.

It localises to the periplasm. It catalyses the reaction 1-haloalkane + H2O = a halide anion + a primary alcohol + H(+). The enzyme catalyses (3R,6R)-1,3,4,6-tetrachlorocyclohexa-1,4-diene + 2 H2O = 2,5-dichlorocyclohexa-2,5-dien-1,4-diol + 2 chloride + 2 H(+). Its pathway is xenobiotic degradation; gamma-hexachlorocyclohexane degradation. Its activity is regulated as follows. Competitively inhibited by the key pollutants 1,2-dichloroethane (1,2-DCE) and 1,2-dichloropropane (1,2-DCP). Its function is as follows. Catalyzes hydrolytic cleavage of carbon-halogen bonds in halogenated aliphatic compounds, leading to the formation of the corresponding primary alcohols, halide ions and protons. Has a broad substrate specificity since not only monochloroalkanes (C3 to C10) but also dichloroalkanes (&gt; C3), bromoalkanes, and chlorinated aliphatic alcohols are good substrates. Shows almost no activity with 1,2-dichloroethane, but very high activity with the brominated analog. Is involved in the degradation of the important environmental pollutant gamma-hexachlorocyclohexane (gamma-HCH or lindane) as it also catalyzes conversion of 1,3,4,6-tetrachloro-1,4-cyclohexadiene (1,4-TCDN) to 2,5-dichloro-2,5-cyclohexadiene-1,4-diol (2,5-DDOL) via the intermediate 2,4,5-trichloro-2,5-cyclohexadiene-1-ol (2,4,5-DNOL). This degradation pathway allows S.japonicum UT26 to grow on gamma-HCH as the sole source of carbon and energy. The protein is Haloalkane dehalogenase of Sphingobium indicum (strain DSM 16413 / CCM 7287 / MTCC 6362 / UT26 / NBRC 101211 / UT26S) (Sphingobium japonicum).